Consider the following 184-residue polypeptide: Protein Syd (184 aa).

Belongs to the Syd family.

It localises to the cell inner membrane. In terms of biological role, interacts with the SecY protein in vivo. May bind preferentially to an uncomplexed state of SecY, thus functioning either as a chelating agent for excess SecY in the cell or as a regulatory factor that negatively controls the translocase function. In Edwardsiella ictaluri (strain 93-146), this protein is Protein Syd.